The sequence spans 346 residues: O-methyltransferase atr3 (346 aa).

Disordered regions lie at residues 1-22 (MTSV…DDLM) and 52-88 (GLKS…WYHA). Residues 190 to 191 (DL) and 217 to 218 (DI) contribute to the S-adenosyl-L-methionine site.

The protein belongs to the class I-like SAM-binding methyltransferase superfamily. Homodimer.

It carries out the reaction 4-O-demethylbarbatate + S-adenosyl-L-methionine = proatranorin I + S-adenosyl-L-homocysteine. It functions in the pathway secondary metabolite biosynthesis; terpenoid biosynthesis. O-methyltransferase; part of the gene cluster that mediates the biosynthesis of atranorin, a depside of polyketide origin that accumulates in the cortical or medullary layers of lichen thalli. Atr3 methylates the carboxyl group of 4-O-demethylbarbatic acid to yield proatranorin I. Atr3 is also able to methylate the atr2 product proatranorin III to produce the final compound atranorin. The first step in the pathway is performed by the non-reducing polyketide synthase atr1 that produces 4-O-demethylbarbatic acid composed of two 3-methylorsellinic acid (3MOA) moieties. The pathway continues with the actions of the cytochrome P450 monooygenase atr2 that catalizes the oxidation of c-9 and the O-methyltransferase atr3 that performs the methylation of the carboxyl group to yield atranorin, via the proatranorin II and III intermediates if atr2 acts first, or the proatranorin I intermediate if atr3 acts first. The protein is O-methyltransferase atr3 of Stereocaulon alpinum (Alpine snow lichen).